Here is a 710-residue protein sequence, read N- to C-terminus: Ferrioxamine receptor (710 aa).

The first 26 residues, 1–26 (MFSAFIIKRSAILCSLAMFIPLASIA), serve as a signal peptide directing secretion. The TonB box motif lies at 28-35 (DTIEVTAK). The next 30 membrane-spanning stretches (beta stranded) occupy residues 29–37 (TIEVTAKAG), 65–73 (TAQSVSVVT), 91–99 (YTPGVFTGF), 106–114 (YDTVALRGF), 137–145 (NVLQVDPWF), 152–160 (IKGPSSALY), 180–188 (SEGHFRLTA), 194–202 (QVAAFDYTD), 208–216 (WAFRLTGIT), 259–267 (GGYHSAVPA), 271–279 (IYGQKLSRG), 293–301 (WQQIYSYEF), 309–317 (WSFRQNASY), 353–361 (FAVDNQLEA), 370–378 (HKVLLGVDF), 427–435 (YEQSGVYLQ), 443–451 (WHLNLSGRY), 476–484 (GRASLLYSF), 491–499 (YVSYSQAIT), 517–525 (EQYEVGIIY), 531–539 (TSLYSAALY), 555–563 (YYVPAGKVN), 567–575 (LELEARSQI), 579–587 (LSVIAGYTY), 610–618 (NMASLWAQY), 624–632 (INVGAGIRY), 649–657 (YTLGDASVR), 671–679 (FVQLNVNNI), 684–692 (YVAACYSTS), and 702–710 (VQATVGYDF). Residues 61 to 174 (PLILTAQSVS…PGGVVMMTSK (114 aa)) form the TBDR plug domain. Residues 181-710 (EGHFRLTAGN…SVQATVGYDF (530 aa)) form the TBDR beta-barrel domain. The TonB C-terminal box motif lies at 693–710 (YCYWGAERSVQATVGYDF).

The protein belongs to the TonB-dependent receptor family.

The protein resides in the cell outer membrane. In terms of biological role, ferrioxamine binding and uptake, in association with the TonB protein. The chain is Ferrioxamine receptor (foxA) from Yersinia enterocolitica.